Reading from the N-terminus, the 270-residue chain is Urease accessory protein UreD (270 aa).

Belongs to the UreD family. UreD, UreF and UreG form a complex that acts as a GTP-hydrolysis-dependent molecular chaperone, activating the urease apoprotein by helping to assemble the nickel containing metallocenter of UreC. The UreE protein probably delivers the nickel.

The protein resides in the cytoplasm. Functionally, required for maturation of urease via the functional incorporation of the urease nickel metallocenter. This chain is Urease accessory protein UreD, found in Klebsiella pneumoniae.